Here is a 5101-residue protein sequence, read N- to C-terminus: Malformin synthetase mlfA (5101 aa).

The tract at residues 225–616 (ERHAANRPHS…CGRADTQVKL (392 aa)) is adenylation 1. The region spanning 757-830 (SRLEQKIQLA…EAASLAEVQE (74 aa)) is the Carrier 1 domain. Serine 791 bears the O-(pantetheine 4'-phosphoryl)serine mark. Residues 868–1299 (EDVFPCTTMQ…ALNTLSLLQA (432 aa)) form a condensation 1 region. Positions 1327–1716 (DRWVTRQPEG…GRKDTQVKLR (390 aa)) are adenylation 2. The 78-residue stretch at 1854–1931 (TPTLELERTL…QLAAEVGEPA (78 aa)) folds into the Carrier 2 domain. The residue at position 1891 (serine 1891) is an O-(pantetheine 4'-phosphoryl)serine. Disordered regions lie at residues 1932–1961 (GQSA…DGVD) and 1994–2020 (GGSS…KKNA). Low complexity-rich tracts occupy residues 1934–1958 (SASS…STND) and 1996–2013 (SSSN…SSSS). Residues 2066–2481 (EDIYPATALQ…AVSCSDKETL (416 aa)) form a condensation 2 region. The adenylation 3 stretch occupies residues 2504–2896 (RRTPHAPAVC…IGRRDGQLKL (393 aa)). Positions 3032–3108 (RPVTSQEHEM…QLICHLNTIR (77 aa)) constitute a Carrier 3 domain. Serine 3069 bears the O-(pantetheine 4'-phosphoryl)serine mark. 2 condensation regions span residues 3125–3590 (WVAL…TYDQ) and 3611–4030 (NIYP…EHLV). The tract at residues 4055 to 4445 (HNSRQAVCAW…VGRKDNQIKF (391 aa)) is adenylation 4. In terms of domain architecture, Carrier 4 spans 4579–4655 (MPSTAAERKM…DLSDQAKSLI (77 aa)). At serine 4616 the chain carries O-(pantetheine 4'-phosphoryl)serine. Residues 4712 to 5097 (IVVDIPGPID…KIVGLLRHPE (386 aa)) are condensation 5.

Belongs to the NRP synthetase family.

It participates in secondary metabolite biosynthesis. Nonribosomal peptide synthetase; part of the gene cluster that mediates the biosynthesis of malformins, cyclic pentapeptides with a disulfide bond between 2 consecutive cysteins, that show potential anti-tumor as well as antimalarial and antitrypanosomal properties. The nonribosomal peptide synthetase mlfA is responsible of the formation of the cyclic pentapeptide. The malformin biosynthesis clusters in malformin-producing fungi also contain enzymes involved in the formation of the disulfide bond between the two consecutive cysteins within malformins, in addition to additional tailoring enzymes such as methyltransferases or oxidoreductases. They are also composed of up to 4 major facilitator superfamily transporters, and transcription factors probably involved in the regulation of the expression of those clusters. The polypeptide is Malformin synthetase mlfA (Aspergillus kawachii (strain NBRC 4308) (White koji mold)).